The primary structure comprises 367 residues: UDP-N-acetylglucosamine--N-acetylmuramyl-(pentapeptide) pyrophosphoryl-undecaprenol N-acetylglucosamine transferase (367 aa).

UDP-N-acetyl-alpha-D-glucosamine contacts are provided by residues 15 to 17 (TGG), Asn127, Arg163, Ser191, Ile249, and Gln294.

The protein belongs to the glycosyltransferase 28 family. MurG subfamily.

The protein localises to the cell inner membrane. The catalysed reaction is di-trans,octa-cis-undecaprenyl diphospho-N-acetyl-alpha-D-muramoyl-L-alanyl-D-glutamyl-meso-2,6-diaminopimeloyl-D-alanyl-D-alanine + UDP-N-acetyl-alpha-D-glucosamine = di-trans,octa-cis-undecaprenyl diphospho-[N-acetyl-alpha-D-glucosaminyl-(1-&gt;4)]-N-acetyl-alpha-D-muramoyl-L-alanyl-D-glutamyl-meso-2,6-diaminopimeloyl-D-alanyl-D-alanine + UDP + H(+). It functions in the pathway cell wall biogenesis; peptidoglycan biosynthesis. In terms of biological role, cell wall formation. Catalyzes the transfer of a GlcNAc subunit on undecaprenyl-pyrophosphoryl-MurNAc-pentapeptide (lipid intermediate I) to form undecaprenyl-pyrophosphoryl-MurNAc-(pentapeptide)GlcNAc (lipid intermediate II). This is UDP-N-acetylglucosamine--N-acetylmuramyl-(pentapeptide) pyrophosphoryl-undecaprenol N-acetylglucosamine transferase from Burkholderia thailandensis (strain ATCC 700388 / DSM 13276 / CCUG 48851 / CIP 106301 / E264).